The following is a 345-amino-acid chain: Dihydroorotase (345 aa).

Positions 13 and 15 each coordinate Zn(2+). Substrate-binding positions include 15–17 and N41; that span reads HFR. Zn(2+) is bound by residues K98, H135, and H173. Position 98 is an N6-carboxylysine (K98). Position 135 (H135) interacts with substrate. L218 is a substrate binding site. D246 lines the Zn(2+) pocket. D246 is an active-site residue. Residues H250 and A262 each coordinate substrate.

It belongs to the metallo-dependent hydrolases superfamily. DHOase family. Class II DHOase subfamily. As to quaternary structure, homodimer. Requires Zn(2+) as cofactor.

It catalyses the reaction (S)-dihydroorotate + H2O = N-carbamoyl-L-aspartate + H(+). Its pathway is pyrimidine metabolism; UMP biosynthesis via de novo pathway; (S)-dihydroorotate from bicarbonate: step 3/3. In terms of biological role, catalyzes the reversible cyclization of carbamoyl aspartate to dihydroorotate. This chain is Dihydroorotase, found in Shewanella halifaxensis (strain HAW-EB4).